The following is a 289-amino-acid chain: Protease HtpX homolog (289 aa).

2 helical membrane passes run 5 to 27 and 40 to 60; these read LWVR…GYLI and ALFM…SWYN. Histidine 133 contributes to the Zn(2+) binding site. Residue glutamate 134 is part of the active site. Position 137 (histidine 137) interacts with Zn(2+). The next 2 helical transmembrane spans lie at 143 to 163 and 181 to 201; these read TLIQ…VNFA and IVAL…IQLA. Glutamate 207 is a binding site for Zn(2+).

It belongs to the peptidase M48B family. Requires Zn(2+) as cofactor.

It is found in the cell membrane. This Pyrococcus furiosus (strain ATCC 43587 / DSM 3638 / JCM 8422 / Vc1) protein is Protease HtpX homolog.